The chain runs to 172 residues: ATP synthase subunit b (172 aa).

Residues 11 to 30 (LIAQIINFVIVLWVLNRFAF) form a helical membrane-spanning segment.

This sequence belongs to the ATPase B chain family. In terms of assembly, F-type ATPases have 2 components, F(1) - the catalytic core - and F(0) - the membrane proton channel. F(1) has five subunits: alpha(3), beta(3), gamma(1), delta(1), epsilon(1). F(0) has three main subunits: a(1), b(2) and c(10-14). The alpha and beta chains form an alternating ring which encloses part of the gamma chain. F(1) is attached to F(0) by a central stalk formed by the gamma and epsilon chains, while a peripheral stalk is formed by the delta and b chains.

Its subcellular location is the cell inner membrane. F(1)F(0) ATP synthase produces ATP from ADP in the presence of a proton or sodium gradient. F-type ATPases consist of two structural domains, F(1) containing the extramembraneous catalytic core and F(0) containing the membrane proton channel, linked together by a central stalk and a peripheral stalk. During catalysis, ATP synthesis in the catalytic domain of F(1) is coupled via a rotary mechanism of the central stalk subunits to proton translocation. In terms of biological role, component of the F(0) channel, it forms part of the peripheral stalk, linking F(1) to F(0). In Methylacidiphilum infernorum (isolate V4) (Methylokorus infernorum (strain V4)), this protein is ATP synthase subunit b.